The following is a 977-amino-acid chain: ATP-dependent RNA helicase DBP10 (977 aa).

The segment at 1-121 (MGIISKRKRH…NSEKSKHKKG (121 aa)) is disordered. Polar residues predominate over residues 26 to 35 (ITSNIGLNTA). The segment covering 37 to 61 (SSDESESSGDDEEEVQDIVDFSDEE) has biased composition (acidic residues). Residues 70–81 (SNKTLTDNNSFP) show a composition bias toward polar residues. Positions 121 to 149 (GSFPSFGFSKLILSNVHKKGFRQPTPIQR) match the Q motif motif. In terms of domain architecture, Helicase ATP-binding spans 152–324 (IPLILQKRDI…KAGLTNPVLV (173 aa)). ATP is bound at residue 165 to 172 (ARTGSGKT). The short motif at 272–275 (DEAD) is the DEAD box element. 2 disordered regions span residues 377–403 (NKSLSDSDSEDEDNKGKQNSRKSKKGK) and 871–977 (KTGA…KRKF). Positions 394–403 (QNSRKSKKGK) are enriched in basic residues. Residues 403-554 (KFQKLKVSAS…SMYEASCKLM (152 aa)) form the Helicase C-terminal domain. Over residues 878 to 894 (SIPTNLLSDPTTDSGSQ) the composition is skewed to polar residues. The span at 910–921 (RLPDKFRDDYQS) shows a compositional bias: basic and acidic residues. The segment covering 961 to 977 (KEKKRQKNARPTKKRKF) has biased composition (basic residues).

Belongs to the DEAD box helicase family. DDX54/DBP10 subfamily.

It is found in the nucleus. Its subcellular location is the nucleolus. It catalyses the reaction ATP + H2O = ADP + phosphate + H(+). In terms of biological role, ATP-binding RNA helicase involved in the biogenesis of 60S ribosomal subunits and is required for the normal formation of 25S and 5.8S rRNAs. The chain is ATP-dependent RNA helicase DBP10 (DBP10) from Vanderwaltozyma polyspora (strain ATCC 22028 / DSM 70294 / BCRC 21397 / CBS 2163 / NBRC 10782 / NRRL Y-8283 / UCD 57-17) (Kluyveromyces polysporus).